Consider the following 524-residue polypeptide: 2,3-bisphosphoglycerate-independent phosphoglycerate mutase (524 aa).

Aspartate 13 and serine 63 together coordinate Mn(2+). The active-site Phosphoserine intermediate is the serine 63. Residues histidine 124, arginine 154–aspartate 155, arginine 186, arginine 192, arginine 262–arginine 265, and lysine 337 contribute to the substrate site. Mn(2+) contacts are provided by aspartate 404, histidine 408, aspartate 445, histidine 446, and histidine 464.

This sequence belongs to the BPG-independent phosphoglycerate mutase family. As to quaternary structure, monomer. Requires Mn(2+) as cofactor.

The enzyme catalyses (2R)-2-phosphoglycerate = (2R)-3-phosphoglycerate. Its pathway is carbohydrate degradation; glycolysis; pyruvate from D-glyceraldehyde 3-phosphate: step 3/5. Its function is as follows. Catalyzes the interconversion of 2-phosphoglycerate and 3-phosphoglycerate. The chain is 2,3-bisphosphoglycerate-independent phosphoglycerate mutase from Thermomicrobium roseum (strain ATCC 27502 / DSM 5159 / P-2).